A 629-amino-acid chain; its full sequence is Chaperone protein HtpG (629 aa).

An a; substrate-binding region spans residues 1–343; that stretch reads MQKQTLSFQA…SSDLPLNVSR (343 aa). Residues 344-558 form a b region; that stretch reads ELLQESRAVK…DGDMSTQLAR (215 aa). Residues 559–629 form a c region; it reads MLKQAGQTVP…YVRRVNALLV (71 aa).

This sequence belongs to the heat shock protein 90 family. As to quaternary structure, homodimer.

The protein resides in the cytoplasm. Its function is as follows. Molecular chaperone. Has ATPase activity. This Polaromonas naphthalenivorans (strain CJ2) protein is Chaperone protein HtpG.